Consider the following 37-residue polypeptide: Large ribosomal subunit protein bL36c (37 aa).

This sequence belongs to the bacterial ribosomal protein bL36 family.

It localises to the plastid. The protein localises to the chloroplast. This is Large ribosomal subunit protein bL36c from Jasminum nudiflorum (Winter jasmine).